Here is a 555-residue protein sequence, read N- to C-terminus: Urocanate hydratase (555 aa).

NAD(+) contacts are provided by residues 52-53 (GG), glutamine 130, 176-178 (GMG), glutamate 196, arginine 201, 242-243 (NA), 263-267 (QTSAH), 273-274 (YL), and tyrosine 322. The active site involves cysteine 410. Glycine 492 serves as a coordination point for NAD(+).

This sequence belongs to the urocanase family. It depends on NAD(+) as a cofactor.

Its subcellular location is the cytoplasm. The catalysed reaction is 4-imidazolone-5-propanoate = trans-urocanate + H2O. It functions in the pathway amino-acid degradation; L-histidine degradation into L-glutamate; N-formimidoyl-L-glutamate from L-histidine: step 2/3. Catalyzes the conversion of urocanate to 4-imidazolone-5-propionate. The sequence is that of Urocanate hydratase from Shewanella sp. (strain W3-18-1).